A 393-amino-acid polypeptide reads, in one-letter code: FAD-dependent monooxygenase dbaB (393 aa).

A signal peptide spans 1 to 23 (MTRTSPTLPVIILGAGMVGLTLA). Residues glutamate 37 and arginine 107 each coordinate FAD. N-linked (GlcNAc...) asparagine glycosylation occurs at asparagine 128. The active site involves tyrosine 221. The N-linked (GlcNAc...) asparagine glycan is linked to asparagine 233. Aspartate 320 lines the FAD pocket.

Belongs to the paxM FAD-dependent monooxygenase family. Requires FAD as cofactor.

The protein operates within secondary metabolite biosynthesis. In terms of biological role, FAD-dependent monooxygenase; part of the gene cluster that mediates the biosynthesis of the antibiotic 2,4-dihydroxy-3-methyl-6-(2-oxopropyl)benzaldehyde (DHMBA) and its derivatives. The direct non-reducing polyketide synthase dbaI product is 2,4-dihydroxy-3-methyl-6-(2-oxopropyl)benzaldehyde (DHMBA), produced by condensation of one acetyl-CoA starter unit with 4 malonyl-CoA units and one methylation step. The FAD-dependent monooxygenase dbaH is responsible for the synthesis of yellow pigments derived from the oxidation of DHMBA. The roles of dbaB, C, E and F have still to be determined. The polypeptide is FAD-dependent monooxygenase dbaB (Emericella nidulans (strain FGSC A4 / ATCC 38163 / CBS 112.46 / NRRL 194 / M139) (Aspergillus nidulans)).